Consider the following 470-residue polypeptide: Chromosomal replication initiator protein DnaA (470 aa).

The segment at 1-79 (MTDDTWGLLR…AVQRLAFKVA (79 aa)) is domain I, interacts with DnaA modulators. The domain II stretch occupies residues 79-128 (AANSPTRPVQPTMSEAIEEPAPLQTTVVDQLGNQEGNTSVKSPPEDLQAA). The domain III, AAA+ region stretch occupies residues 129-350 (PLDPRFTFDS…GALTRLFAFA (222 aa)). Positions 173, 175, 176, and 177 each coordinate ATP. The domain IV, binds dsDNA stretch occupies residues 351–470 (SLVGREIDMD…VEMLRRSLEA (120 aa)).

This sequence belongs to the DnaA family. Oligomerizes as a right-handed, spiral filament on DNA at oriC.

The protein resides in the cytoplasm. Its function is as follows. Plays an essential role in the initiation and regulation of chromosomal replication. ATP-DnaA binds to the origin of replication (oriC) to initiate formation of the DNA replication initiation complex once per cell cycle. Binds the DnaA box (a 9 base pair repeat at the origin) and separates the double-stranded (ds)DNA. Forms a right-handed helical filament on oriC DNA; dsDNA binds to the exterior of the filament while single-stranded (ss)DNA is stabiized in the filament's interior. The ATP-DnaA-oriC complex binds and stabilizes one strand of the AT-rich DNA unwinding element (DUE), permitting loading of DNA polymerase. After initiation quickly degrades to an ADP-DnaA complex that is not apt for DNA replication. Binds acidic phospholipids. This is Chromosomal replication initiator protein DnaA from Ruegeria sp. (strain TM1040) (Silicibacter sp.).